The sequence spans 202 residues: ATP-dependent Clp protease proteolytic subunit (202 aa).

The Nucleophile role is filled by Ser-106. His-131 is an active-site residue.

The protein belongs to the peptidase S14 family. As to quaternary structure, fourteen ClpP subunits assemble into 2 heptameric rings which stack back to back to give a disk-like structure with a central cavity, resembling the structure of eukaryotic proteasomes.

The protein resides in the cytoplasm. It carries out the reaction Hydrolysis of proteins to small peptides in the presence of ATP and magnesium. alpha-casein is the usual test substrate. In the absence of ATP, only oligopeptides shorter than five residues are hydrolyzed (such as succinyl-Leu-Tyr-|-NHMec, and Leu-Tyr-Leu-|-Tyr-Trp, in which cleavage of the -Tyr-|-Leu- and -Tyr-|-Trp bonds also occurs).. Cleaves peptides in various proteins in a process that requires ATP hydrolysis. Has a chymotrypsin-like activity. Plays a major role in the degradation of misfolded proteins. The protein is ATP-dependent Clp protease proteolytic subunit of Acidovorax sp. (strain JS42).